Reading from the N-terminus, the 566-residue chain is Endoglucanase G (566 aa).

The first 30 residues, 1–30, serve as a signal peptide directing secretion; it reads MKKAKAIFSLVVALMVLAIFCFAQNTGSTA. Residue Glu226 is the Proton donor of the active site. Residue Glu381 is the Nucleophile of the active site. The interval 473–494 is disordered; it reads GTPQASDPPATPTATPTKPAAS. The span at 474 to 494 shows a compositional bias: low complexity; sequence TPQASDPPATPTATPTKPAAS. One can recognise a Dockerin domain in the interval 497–564; sequence PSFIYGDINS…LLRSIDKLPH (68 aa).

It belongs to the glycosyl hydrolase 5 (cellulase A) family.

The enzyme catalyses Endohydrolysis of (1-&gt;4)-beta-D-glucosidic linkages in cellulose, lichenin and cereal beta-D-glucans.. This enzyme catalyzes the endohydrolysis of 1,4-beta-glucosidic linkages in cellulose, lichenin and cereal beta-D-glucans. The polypeptide is Endoglucanase G (celG) (Acetivibrio thermocellus (strain ATCC 27405 / DSM 1237 / JCM 9322 / NBRC 103400 / NCIMB 10682 / NRRL B-4536 / VPI 7372) (Clostridium thermocellum)).